A 149-amino-acid polypeptide reads, in one-letter code: Secreted RxLR effector protein 3 (149 aa).

The first 23 residues, 1-23 (MRASTILFVLGAAILAVIGVTTA), serve as a signal peptide directing secretion. The RxLR-dEER signature appears at 38–53 (RLLRSGSMEQEPDEER).

It belongs to the RxLR effector family.

The protein resides in the secreted. It localises to the host nucleus. It is found in the host cytoplasm. Functionally, secreted effector that completely suppresses the host cell death induced by cell death-inducing proteins. The protein is Secreted RxLR effector protein 3 of Plasmopara viticola (Downy mildew of grapevine).